Here is a 136-residue protein sequence, read N- to C-terminus: Nucleoside diphosphate kinase (136 aa).

Residues Lys10, Phe58, Arg86, Thr92, Arg104, and Asn114 each coordinate ATP. His117 (pros-phosphohistidine intermediate) is an active-site residue.

It belongs to the NDK family. As to quaternary structure, homotetramer. The cofactor is Mg(2+).

It localises to the cytoplasm. The catalysed reaction is a 2'-deoxyribonucleoside 5'-diphosphate + ATP = a 2'-deoxyribonucleoside 5'-triphosphate + ADP. The enzyme catalyses a ribonucleoside 5'-diphosphate + ATP = a ribonucleoside 5'-triphosphate + ADP. In terms of biological role, major role in the synthesis of nucleoside triphosphates other than ATP. The ATP gamma phosphate is transferred to the NDP beta phosphate via a ping-pong mechanism, using a phosphorylated active-site intermediate. In Mycolicibacterium vanbaalenii (strain DSM 7251 / JCM 13017 / BCRC 16820 / KCTC 9966 / NRRL B-24157 / PYR-1) (Mycobacterium vanbaalenii), this protein is Nucleoside diphosphate kinase.